Consider the following 86-residue polypeptide: Small ribosomal subunit protein bS16 (86 aa).

It belongs to the bacterial ribosomal protein bS16 family.

In Xylella fastidiosa (strain M23), this protein is Small ribosomal subunit protein bS16.